We begin with the raw amino-acid sequence, 382 residues long: MSLQTTTQQIFSCAFGYAPTHTVQAPGRVNLIGEHTDYNDGFVLPCAIDYQTVIACAKRSDRQVRTIAVDYDNQQDIFSLDEPIERHPQQLWSDYVRGVVKYLQQRAADLGGVDMVISGNVPQGAGLSSSASLEVAVGSVFRQLYQLPLSSADIALNGQQAENQFVGCHCGIMDQMISALGEKNSAMLLDCRTLDTRAVPMPSDIAVVIINTNFKRNLVGSEYNTRRQQCEAGARFFGQSSLRDVELAEFAEREHELDPLVAKRVRHVLTENARTLEAANVLARGDLARLAVLMAESHASMRDDFEITVPAVDMLVDIVKTSLGERGGVRMTGGGFGGCVVALMPRERVASVKAAVEQHYQAESGLKETFYVCTASAGAGLC.

Residue 34 to 37 (EHTD) coordinates substrate. 124-130 (GAGLSSS) lines the ATP pocket. Residues serine 130 and glutamate 162 each contribute to the Mg(2+) site. Aspartate 174 acts as the Proton acceptor in catalysis. Tyrosine 223 contributes to the substrate binding site.

Belongs to the GHMP kinase family. GalK subfamily.

Its subcellular location is the cytoplasm. It carries out the reaction alpha-D-galactose + ATP = alpha-D-galactose 1-phosphate + ADP + H(+). The protein operates within carbohydrate metabolism; galactose metabolism. In terms of biological role, catalyzes the transfer of the gamma-phosphate of ATP to D-galactose to form alpha-D-galactose-1-phosphate (Gal-1-P). The chain is Galactokinase from Erwinia tasmaniensis (strain DSM 17950 / CFBP 7177 / CIP 109463 / NCPPB 4357 / Et1/99).